Consider the following 105-residue polypeptide: MSWIILLIAGLLEVVWAVGLKYTHGFSRLTPSIITITAMVISMALLSWAMKTLPVGTAYAIWTGIGAVGAAITGILLLGESASPARLLSLGLIVAGIIGLKLSAH.

A helical membrane pass occupies residues 1-21; the sequence is MSWIILLIAGLLEVVWAVGLK. At 22–28 the chain is on the cytoplasmic side; sequence YTHGFSR. The helical transmembrane segment at 29 to 49 threads the bilayer; it reads LTPSIITITAMVISMALLSWA. Residues 50 to 57 lie on the Periplasmic side of the membrane; it reads MKTLPVGT. The chain crosses the membrane as a helical span at residues 58 to 78; the sequence is AYAIWTGIGAVGAAITGILLL. Residues 79-81 lie on the Cytoplasmic side of the membrane; it reads GES. The chain crosses the membrane as a helical span at residues 82 to 102; that stretch reads ASPARLLSLGLIVAGIIGLKL. The Periplasmic portion of the chain corresponds to 103-105; sequence SAH.

Belongs to the drug/metabolite transporter (DMT) superfamily. Small multidrug resistance (SMR) (TC 2.A.7.1) family. Gdx/SugE subfamily.

The protein localises to the cell inner membrane. Functionally, guanidinium ion exporter. Couples guanidinium export to the proton motive force, exchanging one guanidinium ion for two protons. This Salmonella typhi protein is Guanidinium exporter.